The following is a 278-amino-acid chain: Coiled-coil domain-containing protein 106 (278 aa).

Residues 61–99 (AQLHLALERNSWLQKRIEDLEEERDFLRCQLDKFISSAR) adopt a coiled-coil conformation. Residues 102-119 (ADDHCRGKPGPRRAEGDG) show a composition bias toward basic and acidic residues. The disordered stretch occupies residues 102–174 (ADDHCRGKPG…KPKARERQRV (73 aa)). Ser128 is subject to Phosphoserine. The span at 131-144 (ESAASSLSGASEEG) shows a compositional bias: low complexity. Residues 150–166 (KRQKQKGGPGRRRFGKP) show a composition bias toward basic residues. Positions 151 to 164 (RQKQKGGPGRRRFG) match the Bipartite nuclear localization signal motif.

In terms of assembly, interacts with p53/TP53.

The protein resides in the nucleus. Its function is as follows. Promotes the degradation of p53/TP53 protein and inhibits its transactivity. The chain is Coiled-coil domain-containing protein 106 (CCDC106) from Bos taurus (Bovine).